A 355-amino-acid polypeptide reads, in one-letter code: Phenylalanine--tRNA ligase alpha subunit (355 aa).

Glutamate 273 lines the Mg(2+) pocket.

The protein belongs to the class-II aminoacyl-tRNA synthetase family. Phe-tRNA synthetase alpha subunit type 1 subfamily. In terms of assembly, tetramer of two alpha and two beta subunits. It depends on Mg(2+) as a cofactor.

The protein resides in the cytoplasm. The catalysed reaction is tRNA(Phe) + L-phenylalanine + ATP = L-phenylalanyl-tRNA(Phe) + AMP + diphosphate + H(+). The chain is Phenylalanine--tRNA ligase alpha subunit from Bifidobacterium longum subsp. infantis (strain ATCC 15697 / DSM 20088 / JCM 1222 / NCTC 11817 / S12).